We begin with the raw amino-acid sequence, 336 residues long: GTP 3',8-cyclase (336 aa).

In terms of domain architecture, Radical SAM core spans 17–238; that stretch reads GFSRRFHYLR…WTQQNRNLTD (222 aa). Arginine 26 contributes to the GTP binding site. [4Fe-4S] cluster contacts are provided by cysteine 33 and cysteine 37. Residue tyrosine 39 participates in S-adenosyl-L-methionine binding. Position 40 (cysteine 40) interacts with [4Fe-4S] cluster. Residue arginine 75 participates in GTP binding. S-adenosyl-L-methionine is bound at residue glycine 79. A GTP-binding site is contributed by threonine 106. Serine 130 lines the S-adenosyl-L-methionine pocket. A GTP-binding site is contributed by lysine 167. Position 201 (methionine 201) interacts with S-adenosyl-L-methionine. Residues cysteine 264 and cysteine 267 each contribute to the [4Fe-4S] cluster site. 269 to 271 is a GTP binding site; sequence RLR. Cysteine 281 contributes to the [4Fe-4S] cluster binding site.

It belongs to the radical SAM superfamily. MoaA family. Monomer and homodimer. [4Fe-4S] cluster is required as a cofactor.

It carries out the reaction GTP + AH2 + S-adenosyl-L-methionine = (8S)-3',8-cyclo-7,8-dihydroguanosine 5'-triphosphate + 5'-deoxyadenosine + L-methionine + A + H(+). It functions in the pathway cofactor biosynthesis; molybdopterin biosynthesis. Its function is as follows. Catalyzes the cyclization of GTP to (8S)-3',8-cyclo-7,8-dihydroguanosine 5'-triphosphate. This Tolumonas auensis (strain DSM 9187 / NBRC 110442 / TA 4) protein is GTP 3',8-cyclase.